We begin with the raw amino-acid sequence, 380 residues long: Cell division protein FtsZ (380 aa).

Residues 27–31 (GAGNN), 119–121 (GTG), glutamate 150, and asparagine 189 contribute to the GTP site.

Belongs to the FtsZ family. As to quaternary structure, homodimer. Polymerizes to form a dynamic ring structure in a strictly GTP-dependent manner. Interacts directly with several other division proteins.

The protein localises to the cytoplasm. Its function is as follows. Essential cell division protein that forms a contractile ring structure (Z ring) at the future cell division site. The regulation of the ring assembly controls the timing and the location of cell division. One of the functions of the FtsZ ring is to recruit other cell division proteins to the septum to produce a new cell wall between the dividing cells. Binds GTP and shows GTPase activity. This chain is Cell division protein FtsZ, found in Mycoplasma pneumoniae (strain ATCC 29342 / M129 / Subtype 1) (Mycoplasmoides pneumoniae).